Consider the following 143-residue polypeptide: Turripeptide VIII-01 (143 aa).

The N-terminal stretch at 1–23 (MALSLDILMSVTMVTAVLTTVNA) is a signal peptide. A propeptide spanning residues 24 to 32 (EYKDSRLDS) is cleaved from the precursor.

Post-translationally, contains 4 disulfide bonds. Expressed by the venom duct.

It localises to the secreted. The sequence is that of Turripeptide VIII-01 from Gemmula speciosa (Splendid gem-turris).